The sequence spans 265 residues: tRNA pseudouridine synthase A (265 aa).

The Nucleophile role is filled by D52. Y105 is a substrate binding site.

It belongs to the tRNA pseudouridine synthase TruA family.

The catalysed reaction is uridine(38/39/40) in tRNA = pseudouridine(38/39/40) in tRNA. Its function is as follows. Formation of pseudouridine at positions 38, 39 and 40 in the anticodon stem and loop of transfer RNAs. The polypeptide is tRNA pseudouridine synthase A (Archaeoglobus fulgidus (strain ATCC 49558 / DSM 4304 / JCM 9628 / NBRC 100126 / VC-16)).